The following is a 546-amino-acid chain: Chaperonin GroEL 1 (546 aa).

ATP contacts are provided by residues 29 to 32, 86 to 90, G413, 477 to 479, and D493; these read TIGP, DGTTT, and NAA. Residues 523-546 are disordered; sequence PAEPAPQDGHGHGHGHSHPQGPGF.

This sequence belongs to the chaperonin (HSP60) family. In terms of assembly, forms a cylinder of 14 subunits composed of two heptameric rings stacked back-to-back. Interacts with the co-chaperonin GroES.

Its subcellular location is the cytoplasm. The enzyme catalyses ATP + H2O + a folded polypeptide = ADP + phosphate + an unfolded polypeptide.. In terms of biological role, together with its co-chaperonin GroES, plays an essential role in assisting protein folding. The GroEL-GroES system forms a nano-cage that allows encapsulation of the non-native substrate proteins and provides a physical environment optimized to promote and accelerate protein folding. This chain is Chaperonin GroEL 1, found in Frankia casuarinae (strain DSM 45818 / CECT 9043 / HFP020203 / CcI3).